The following is a 196-amino-acid chain: Peptidyl-tRNA hydrolase (196 aa).

A tRNA-binding site is contributed by Y18. H23 (proton acceptor) is an active-site residue. F69, N71, and N117 together coordinate tRNA.

Belongs to the PTH family. Monomer.

It is found in the cytoplasm. It carries out the reaction an N-acyl-L-alpha-aminoacyl-tRNA + H2O = an N-acyl-L-amino acid + a tRNA + H(+). In terms of biological role, hydrolyzes ribosome-free peptidyl-tRNAs (with 1 or more amino acids incorporated), which drop off the ribosome during protein synthesis, or as a result of ribosome stalling. Catalyzes the release of premature peptidyl moieties from peptidyl-tRNA molecules trapped in stalled 50S ribosomal subunits, and thus maintains levels of free tRNAs and 50S ribosomes. This Vibrio parahaemolyticus serotype O3:K6 (strain RIMD 2210633) protein is Peptidyl-tRNA hydrolase.